Consider the following 69-residue polypeptide: uncharacterized protein (69 aa).

Residues Met21–Glu42 are disordered. A coiled-coil region spans residues Lys35–Lys69.

This is an uncharacterized protein from Acheta domesticus (House cricket).